A 473-amino-acid polypeptide reads, in one-letter code: Photosystem II CP43 reaction center protein (473 aa).

Positions 1-14 (MKTLYSLRRFYHVE) are excised as a propeptide. Threonine 15 is subject to N-acetylthreonine. At threonine 15 the chain carries Phosphothreonine. 5 helical membrane passes run 69 to 93 (LFEVAHFTPEKPMYEQGLILLPHLA), 134 to 155 (LIGPETLEESFPFFGYVWKDKN), 178 to 200 (KACYFGGVYDTWAPGGGDVRIIT), 255 to 275 (KPWAWARRAFVWSGEAYLSYS), and 291 to 312 (WFNNTAYPSEFYGPTGPEASQA). Glutamate 367 serves as a coordination point for [CaMn4O5] cluster. The chain crosses the membrane as a helical span at residues 447 to 471 (RARAAAAGFEKGIERETEPVLFMKP).

The protein belongs to the PsbB/PsbC family. PsbC subfamily. As to quaternary structure, PSII is composed of 1 copy each of membrane proteins PsbA, PsbB, PsbC, PsbD, PsbE, PsbF, PsbH, PsbI, PsbJ, PsbK, PsbL, PsbM, PsbT, PsbX, PsbY, PsbZ, Psb30/Ycf12, at least 3 peripheral proteins of the oxygen-evolving complex and a large number of cofactors. It forms dimeric complexes. The cofactor is Binds multiple chlorophylls and provides some of the ligands for the Ca-4Mn-5O cluster of the oxygen-evolving complex. It may also provide a ligand for a Cl- that is required for oxygen evolution. PSII binds additional chlorophylls, carotenoids and specific lipids..

The protein resides in the plastid. It is found in the chloroplast thylakoid membrane. Functionally, one of the components of the core complex of photosystem II (PSII). It binds chlorophyll and helps catalyze the primary light-induced photochemical processes of PSII. PSII is a light-driven water:plastoquinone oxidoreductase, using light energy to abstract electrons from H(2)O, generating O(2) and a proton gradient subsequently used for ATP formation. This Mesostigma viride (Green alga) protein is Photosystem II CP43 reaction center protein.